The following is a 614-amino-acid chain: Vitamin B12 transporter BtuB (614 aa).

A signal peptide spans 1-20; the sequence is MIKKASLLTACSVTAFSAWA. The TonB box motif lies at 26-33; that stretch reads DTLVVTAN. Residues 38 to 152 enclose the TBDR plug domain; sequence PRSTVLAPTT…IGGVVNIITT (115 aa). Residues Leu83, Ser85, Asn92, and 110-111 contribute to the cyanocob(III)alamin site; that span reads VS. One can recognise a TBDR beta-barrel domain in the interval 155–614; sequence EPGTEISAGW…EYTLSGSYTF (460 aa). 3 consecutive transmembrane segments (beta stranded) span residues 158-165, 169-178, and 184-195; these read TEISAGWG, YQNYDVSTQQ, and TRVTLLGDYAHT. The Ca(2+) site is built by Asp199, Gln211, Asp213, and Asp215. Beta stranded transmembrane passes span 217-227 and 232-248; these read FLSKTLYGALE and DAWS…NRTN. Residues Tyr249 and Asp250 each coordinate Ca(2+). Ala251 provides a ligand contact to cyanocob(III)alamin. A Ca(2+)-binding site is contributed by Asp261. 14 consecutive transmembrane segments (beta stranded) span residues 263 to 277, 279 to 296, 309 to 325, 328 to 337, 353 to 369, 371 to 381, 385 to 400, 403 to 417, 434 to 443, 449 to 458, 473 to 490, 494 to 509, 517 to 529, and 535 to 550; these read RKLY…LRYN, ELIK…KDYN, TLDE…NNII, HGNVGAGVDW, YDQR…QQVG, FTFEGAARSDD, FGRH…WEFI, YRFI…KAPN, KSKQWEGAFE, VNWRISGYRN, YYNE…TANF, PLTH…ARNA, RRAK…QLDW, and DWGI…YDKD. Thr309 contacts cyanocob(III)alamin. Arg517 is a cyanocob(III)alamin binding site. Tyr551 is a binding site for cyanocob(III)alamin. A run of 3 beta stranded transmembrane segments spans residues 558–572, 585–596, and 602–614; these read TVKM…LAVA, IANLFDKDYETV, and AGRE…SYTF. The TonB C-terminal box motif lies at 597–614; the sequence is YGYQTAGREYTLSGSYTF.

The protein belongs to the TonB-dependent receptor family. BtuB (TC 1.B.14.3.1) subfamily.

The protein resides in the cell outer membrane. Its function is as follows. Involved in the active translocation of vitamin B12 (cyanocobalamin) across the outer membrane to the periplasmic space. It derives its energy for transport by interacting with the trans-periplasmic membrane protein TonB. The sequence is that of Vitamin B12 transporter BtuB from Shigella dysenteriae serotype 1 (strain Sd197).